Reading from the N-terminus, the 324-residue chain is Probable uridine nucleosidase 1 (324 aa).

The active site involves histidine 248.

This sequence belongs to the IUNH family.

It is found in the cytoplasm. The catalysed reaction is uridine + H2O = D-ribose + uracil. In terms of biological role, involved in pyrimidine breakdown. The sequence is that of Probable uridine nucleosidase 1 (URH1) from Oryza sativa subsp. japonica (Rice).